The following is a 346-amino-acid chain: tRNA N6-adenosine threonylcarbamoyltransferase (346 aa).

Residues His-120, His-124, and Tyr-141 each coordinate a divalent metal cation. Residues 141-145 (YVSGG), Asp-173, Gly-188, Glu-192, and Asn-277 each bind substrate. Asp-305 is a binding site for a divalent metal cation.

This sequence belongs to the KAE1 / TsaD family. Component of the EKC/KEOPS complex composed of at least BUD32, CGI121, GON7, KAE1 and PCC1; the whole complex dimerizes. Requires a divalent metal cation as cofactor.

The protein localises to the cytoplasm. It is found in the nucleus. The catalysed reaction is L-threonylcarbamoyladenylate + adenosine(37) in tRNA = N(6)-L-threonylcarbamoyladenosine(37) in tRNA + AMP + H(+). Component of the EKC/KEOPS complex that is required for the formation of a threonylcarbamoyl group on adenosine at position 37 (t(6)A37) in tRNAs that read codons beginning with adenine. The complex is probably involved in the transfer of the threonylcarbamoyl moiety of threonylcarbamoyl-AMP (TC-AMP) to the N6 group of A37. KAE1 likely plays a direct catalytic role in this reaction, but requires other protein(s) of the complex to fulfill this activity. The EKC/KEOPS complex also promotes both telomere uncapping and telomere elongation. The complex is required for efficient recruitment of transcriptional coactivators. This Gibberella zeae (strain ATCC MYA-4620 / CBS 123657 / FGSC 9075 / NRRL 31084 / PH-1) (Wheat head blight fungus) protein is tRNA N6-adenosine threonylcarbamoyltransferase.